Reading from the N-terminus, the 559-residue chain is Sesquiterpene synthase TPS3 (559 aa).

Residues Arg275, Asp312, Asp316, Arg453, and Asp456 each coordinate (2E,6E)-farnesyl diphosphate. Asp312 and Asp316 together coordinate Mg(2+). Positions 312–316 (DDTYD) match the DDXXD motif motif. 3 residues coordinate Mg(2+): Asp456, Thr460, and Glu464.

The protein belongs to the terpene synthase family. Tpsa subfamily. Monomer. Mg(2+) serves as cofactor. As to expression, highly expressed in glandular trichomes. Expressed in roots and leaves.

It is found in the cytoplasm. The catalysed reaction is (2E,6E)-farnesyl diphosphate = (+)-(R)-germacrene A + diphosphate. It participates in secondary metabolite biosynthesis; terpenoid biosynthesis. Its function is as follows. Sesquiterpene synthase involved in the biosynthesis of volatile compounds. Mediates the conversion of (2E,6E)-farnesyl diphosphate (FPP) into (+)-(R)-germacrene A. This is Sesquiterpene synthase TPS3 from Xanthium strumarium (Rough cocklebur).